A 153-amino-acid chain; its full sequence is Ribonuclease K6 (153 aa).

An N-terminal signal peptide occupies residues 1-27 (MVVDLPRYLPLLLLLELWEPMYLLCSQ). The Proton acceptor role is filled by His41. 4 disulfides stabilise this stretch: Cys49/Cys107, Cys63/Cys117, Cys81/Cys132, and Cys88/Cys95. Asn58 carries N-linked (GlcNAc...) asparagine glycosylation. Residue 64 to 68 (KQINT) participates in substrate binding. N-linked (GlcNAc...) asparagine glycosylation is present at Asn85. Lys89 is a binding site for substrate. His148 serves as the catalytic Proton donor.

It belongs to the pancreatic ribonuclease family. Interacts (via N-terminus) with bacterial lipopolysaccharide (LPS). As to expression, highly expressed in spleen (at protein level). Has little or no expression in healthy kidneys (at protein level). Detected at high levels in infected kidneys (at protein level). Expressed at low levels in bladder. Also detected in skeletal muscle, heart and bone marrow.

The protein resides in the secreted. It is found in the lysosome. The protein localises to the cytoplasmic granule. Its function is as follows. Ribonuclease which shows a preference for the pyrimidines uridine and cytosine. Has potent antibacterial activity against a range of Gram-positive and Gram-negative bacteria, including P.aeruginosa, A.baumanii, M.luteus, S.aureus, E.faecalis, E.faecium, S.saprophyticus and E.coli. Causes loss of bacterial membrane integrity, and also promotes agglutination of Gram-negative bacteria. Probably contributes to urinary tract sterility. Bactericidal activity is independent of RNase activity. This Mus musculus (Mouse) protein is Ribonuclease K6 (Rnase6).